Here is a 154-residue protein sequence, read N- to C-terminus: Ribonuclease H (154 aa).

The region spanning 5–146 (EQNIVYLYCD…ADELANRGID (142 aa)) is the RNase H type-1 domain. Positions 14, 52, 74, and 138 each coordinate Mg(2+).

It belongs to the RNase H family. Monomer. It depends on Mg(2+) as a cofactor.

The protein resides in the cytoplasm. The enzyme catalyses Endonucleolytic cleavage to 5'-phosphomonoester.. Its function is as follows. Endonuclease that specifically degrades the RNA of RNA-DNA hybrids. The polypeptide is Ribonuclease H (Coxiella burnetii (strain CbuG_Q212) (Coxiella burnetii (strain Q212))).